The sequence spans 292 residues: ATP synthase gamma chain (292 aa).

It belongs to the ATPase gamma chain family. As to quaternary structure, F-type ATPases have 2 components, CF(1) - the catalytic core - and CF(0) - the membrane proton channel. CF(1) has five subunits: alpha(3), beta(3), gamma(1), delta(1), epsilon(1). CF(0) has three main subunits: a, b and c.

It is found in the cell inner membrane. Produces ATP from ADP in the presence of a proton gradient across the membrane. The gamma chain is believed to be important in regulating ATPase activity and the flow of protons through the CF(0) complex. This chain is ATP synthase gamma chain, found in Magnetococcus marinus (strain ATCC BAA-1437 / JCM 17883 / MC-1).